Consider the following 161-residue polypeptide: Spermidine N(1)-acetyltransferase (161 aa).

In terms of domain architecture, N-acetyltransferase spans 3–160; it reads IEIRKLSIED…SDFIMEKKYE (158 aa). Acetyl-CoA is bound by residues 92–94, 99–104, Asn131, and Ser136; these read LYL and THKKIG. Tyr138 (proton donor) is an active-site residue. Lys140 provides a ligand contact to acetyl-CoA.

This sequence belongs to the acetyltransferase family. In terms of assembly, monomer or homodimer.

It catalyses the reaction an alkane-alpha,omega-diamine + acetyl-CoA = an N-acetylalkane-alpha,omega-diamine + CoA + H(+). Involved in the protection against polyamine toxicity by regulating their concentration. Could also be involved in the negative control of sporulation as well as production of degradative enzymes such as alpha-amylase, levansucrase and alkaline phosphatase. Catalyzes the transfer of an acetyl group from acetyl coenzyme A (AcCoA) to an acceptor substrate and release both CoA and the acetylated product. It can use a variety of substrates including spermidine, L-tryptophan, L-leucine, L-lysine, dopamine and tyramine. This chain is Spermidine N(1)-acetyltransferase, found in Thermoplasma acidophilum (strain ATCC 25905 / DSM 1728 / JCM 9062 / NBRC 15155 / AMRC-C165).